We begin with the raw amino-acid sequence, 876 residues long: Alanine--tRNA ligase (876 aa).

Lys74 bears the N6-acetyllysine mark. Zn(2+)-binding residues include His564, His568, Cys666, and His670.

Belongs to the class-II aminoacyl-tRNA synthetase family. As to quaternary structure, homotetramer. Zn(2+) is required as a cofactor.

It localises to the cytoplasm. The enzyme catalyses tRNA(Ala) + L-alanine + ATP = L-alanyl-tRNA(Ala) + AMP + diphosphate. In terms of biological role, catalyzes the attachment of alanine to tRNA(Ala) in a two-step reaction: alanine is first activated by ATP to form Ala-AMP and then transferred to the acceptor end of tRNA(Ala). Also edits incorrectly charged Ser-tRNA(Ala) and Gly-tRNA(Ala) via its editing domain. This Escherichia coli (strain SMS-3-5 / SECEC) protein is Alanine--tRNA ligase.